The sequence spans 396 residues: MSEYSVFTSESVSEGHPDKIADQISDAVLDAIIAKDKYARVACETLVKTGVAIIAGEVTTSAWVDLEELVRKVIIDIGYDSSDVGFDGATCGVLNIIGKQSVDINQGVDRAKPEDQGAGDQGLMFGYASNETDVLMPAPICFSHRLVERQAEARKSGLLPWLRPDAKSQVTCRYEGGKVVGIDAVVLSTQHNPEVSYNDLRDGVMELIIKQVLPAELLHKDTQFHINPTGNFVIGGPVGDCGLTGRKIIVDSYGGMARHGGGAFSGKDPSKVDRSAAYAGRYVAKNIVAAGLAERCEIQVSYAIGVAQPTSISINTFGTGKVSDEKIVQLVREHFDLRPYAITKMLDLLHPMYQPTAAYGHFGRHPFELTVDGDTFTAFTWEKTDKAALLRDAAGL.

Histidine 16 is an ATP binding site. Mg(2+) is bound at residue aspartate 18. Glutamate 44 contacts K(+). Glutamate 57 and glutamine 100 together coordinate L-methionine. The segment at 100–110 (QSVDINQGVDR) is flexible loop. ATP is bound by residues 165–167 (DAK), aspartate 240, 246–247 (RK), alanine 263, and lysine 267. Aspartate 240 contributes to the L-methionine binding site. Position 271 (lysine 271) interacts with L-methionine.

This sequence belongs to the AdoMet synthase family. In terms of assembly, homotetramer; dimer of dimers. The cofactor is Mg(2+). Requires K(+) as cofactor.

It localises to the cytoplasm. The enzyme catalyses L-methionine + ATP + H2O = S-adenosyl-L-methionine + phosphate + diphosphate. The protein operates within amino-acid biosynthesis; S-adenosyl-L-methionine biosynthesis; S-adenosyl-L-methionine from L-methionine: step 1/1. Functionally, catalyzes the formation of S-adenosylmethionine (AdoMet) from methionine and ATP. The overall synthetic reaction is composed of two sequential steps, AdoMet formation and the subsequent tripolyphosphate hydrolysis which occurs prior to release of AdoMet from the enzyme. The protein is S-adenosylmethionine synthase of Pseudomonas aeruginosa (strain UCBPP-PA14).